We begin with the raw amino-acid sequence, 509 residues long: Glycogen synthase 2 (509 aa).

An ADP-alpha-D-glucose-binding site is contributed by K15.

Belongs to the glycosyltransferase 1 family. Bacterial/plant glycogen synthase subfamily.

It carries out the reaction [(1-&gt;4)-alpha-D-glucosyl](n) + ADP-alpha-D-glucose = [(1-&gt;4)-alpha-D-glucosyl](n+1) + ADP + H(+). It participates in glycan biosynthesis; glycogen biosynthesis. Its function is as follows. Synthesizes alpha-1,4-glucan chains using ADP-glucose. In Agrobacterium fabrum (strain C58 / ATCC 33970) (Agrobacterium tumefaciens (strain C58)), this protein is Glycogen synthase 2 (glgA2).